The sequence spans 1032 residues: Error-prone DNA polymerase (1032 aa).

It belongs to the DNA polymerase type-C family. DnaE2 subfamily.

It localises to the cytoplasm. It catalyses the reaction DNA(n) + a 2'-deoxyribonucleoside 5'-triphosphate = DNA(n+1) + diphosphate. Functionally, DNA polymerase involved in damage-induced mutagenesis and translesion synthesis (TLS). It is not the major replicative DNA polymerase. This Hahella chejuensis (strain KCTC 2396) protein is Error-prone DNA polymerase.